A 157-amino-acid chain; its full sequence is UPF0758 protein VC_0510 (157 aa).

The MPN domain occupies 36–157 (ALTNPDATKE…CTSFAERGWL (122 aa)). Residues His-107, His-109, and Asp-120 each coordinate Zn(2+). Positions 107-120 (HNHPSGDSTPSQAD) match the JAMM motif motif.

The protein belongs to the UPF0758 family.

In Vibrio cholerae serotype O1 (strain ATCC 39315 / El Tor Inaba N16961), this protein is UPF0758 protein VC_0510.